Reading from the N-terminus, the 50-residue chain is Large ribosomal subunit protein bL33B (50 aa).

The protein belongs to the bacterial ribosomal protein bL33 family.

The chain is Large ribosomal subunit protein bL33B from Streptococcus pyogenes serotype M1.